We begin with the raw amino-acid sequence, 1023 residues long: StAR-related lipid transfer protein 8 (1023 aa).

2 disordered regions span residues 46–67 and 82–161; these read PMGSSDLLAPPSPGLPATSSCE and TVSL…KVSK. Polar residues predominate over residues 99 to 114; it reads PSSSDRPLLSPTQGQE. Residue Ser108 is modified to Phosphoserine. The segment covering 120 to 130 has biased composition (basic residues); that stretch reads AKKRHRNRSFL. Residues 143–161 are compositionally biased toward polar residues; that stretch reads GSQQAEPKHSPATSEKVSK. Arg169 is modified (asymmetric dimethylarginine). A phosphoserine mark is found at Ser235 and Ser238. A compositionally biased stretch (low complexity) spans 387 to 397; sequence PAQAPAEAEPV. 2 disordered regions span residues 387 to 461 and 467 to 486; these read PAQA…MNEA and LAGLQASMPRERRDSGVGAS. The segment covering 441–459 has biased composition (polar residues); sequence ISDTVASSSELDSSGNSMN. Phosphoserine is present on residues Ser498 and Ser506. Residues 573-777 enclose the Rho-GAP domain; that stretch reads PPLIHVQRTG…HMISDCKKLF (205 aa). The tract at residues 733 to 757 is disordered; that stretch reads KKDSPSPRIKSKRSLIGRPGPRDLS. The region spanning 809–1017 is the START domain; that stretch reads AQAAGVSLSL…RDSFPTLQAA (209 aa).

Binds both the SH2 and PTB domains of TNS1. In terms of tissue distribution, widely expressed with highest levels in kidney, lung and placenta.

The protein resides in the cell junction. The protein localises to the focal adhesion. Functionally, accelerates GTPase activity of RHOA and CDC42, but not RAC1. Stimulates the hydrolysis of phosphatidylinositol 4,5-bisphosphate by PLCD1. The protein is StAR-related lipid transfer protein 8 (STARD8) of Homo sapiens (Human).